The primary structure comprises 473 residues: 3-isopropylmalate dehydratase large subunit (473 aa).

3 residues coordinate [4Fe-4S] cluster: Cys-354, Cys-414, and Cys-417.

The protein belongs to the aconitase/IPM isomerase family. LeuC type 1 subfamily. As to quaternary structure, heterodimer of LeuC and LeuD. [4Fe-4S] cluster is required as a cofactor.

The enzyme catalyses (2R,3S)-3-isopropylmalate = (2S)-2-isopropylmalate. It participates in amino-acid biosynthesis; L-leucine biosynthesis; L-leucine from 3-methyl-2-oxobutanoate: step 2/4. Functionally, catalyzes the isomerization between 2-isopropylmalate and 3-isopropylmalate, via the formation of 2-isopropylmaleate. This chain is 3-isopropylmalate dehydratase large subunit, found in Rhodopseudomonas palustris (strain BisB18).